We begin with the raw amino-acid sequence, 317 residues long: D-alanine--D-alanine ligase (317 aa).

Residues 103–299 (KHIFHSLNID…FNELVKIIVE (197 aa)) enclose the ATP-grasp domain. An ATP-binding site is contributed by 130-183 (KVDYPYVLKPINEGSSIGVHMIFSHEDYLELKNNSSTIMEKMIIEEYIPGIELH). Residues D251, E265, and N267 each contribute to the Mg(2+) site.

The protein belongs to the D-alanine--D-alanine ligase family. It depends on Mg(2+) as a cofactor. Mn(2+) serves as cofactor.

It localises to the cytoplasm. It carries out the reaction 2 D-alanine + ATP = D-alanyl-D-alanine + ADP + phosphate + H(+). It participates in cell wall biogenesis; peptidoglycan biosynthesis. Functionally, cell wall formation. The protein is D-alanine--D-alanine ligase of Wolbachia pipientis subsp. Culex pipiens (strain wPip).